The primary structure comprises 427 residues: Serine hydroxymethyltransferase (427 aa).

Residues L122 and 126 to 128 contribute to the (6S)-5,6,7,8-tetrahydrofolate site; that span reads GHL. K231 is subject to N6-(pyridoxal phosphate)lysine. Residues E247 and 355-357 each bind (6S)-5,6,7,8-tetrahydrofolate; that span reads SPF.

The protein belongs to the SHMT family. As to quaternary structure, homodimer. Requires pyridoxal 5'-phosphate as cofactor.

It is found in the cytoplasm. It carries out the reaction (6R)-5,10-methylene-5,6,7,8-tetrahydrofolate + glycine + H2O = (6S)-5,6,7,8-tetrahydrofolate + L-serine. It participates in one-carbon metabolism; tetrahydrofolate interconversion. Its pathway is amino-acid biosynthesis; glycine biosynthesis; glycine from L-serine: step 1/1. Its function is as follows. Catalyzes the reversible interconversion of serine and glycine with tetrahydrofolate (THF) serving as the one-carbon carrier. This reaction serves as the major source of one-carbon groups required for the biosynthesis of purines, thymidylate, methionine, and other important biomolecules. Also exhibits THF-independent aldolase activity toward beta-hydroxyamino acids, producing glycine and aldehydes, via a retro-aldol mechanism. In Synechocystis sp. (strain ATCC 27184 / PCC 6803 / Kazusa), this protein is Serine hydroxymethyltransferase.